The primary structure comprises 84 residues: Envelope glycoprotein N (84 aa).

The signal sequence occupies residues 1-26 (MSCKKGARQRLYVSLWLFYILVFAAA). The Virion surface segment spans residues 27–45 (TEMDFYSSECHSHTYEIVL). The helical transmembrane segment at 46-66 (NSFSSIWLLINLFLLLCSFAI) threads the bilayer. Topologically, residues 67-84 (FLKYWCYKTFASETVKGY) are intravirion.

This sequence belongs to the herpesviridae glycoprotein N family. Interacts (via N-terminus) with gM (via N-terminus). The gM-gN heterodimer forms the gCII complex.

The protein localises to the virion membrane. It localises to the host membrane. The protein resides in the host Golgi apparatus. It is found in the host trans-Golgi network. In terms of biological role, envelope glycoprotein necessary for proper maturation of gM and modulation of its membrane fusion activity. Also plays a critical role in virion morphogenesis. The sequence is that of Envelope glycoprotein N from Human herpesvirus 6B (strain Z29) (HHV-6 variant B).